The following is a 524-amino-acid chain: Cytochrome P450 monooxygenase patH (524 aa).

Over 1-4 (MEPM) the chain is Cytoplasmic. A helical transmembrane segment spans residues 5 to 23 (LLLILVAAVVLLFVRWAFV). At 24–524 (YGHRTSNMPK…KEVFSQFTEG (501 aa)) the chain is on the lumenal side. An N-linked (GlcNAc...) asparagine glycan is attached at Asn-191. Cys-442 lines the heme pocket. A glycan (N-linked (GlcNAc...) asparagine) is linked at Asn-499.

It belongs to the cytochrome P450 family. The cofactor is heme.

The protein localises to the endoplasmic reticulum membrane. The enzyme catalyses 3-methylphenol + reduced [NADPH--hemoprotein reductase] + O2 = 3-hydroxybenzyl alcohol + oxidized [NADPH--hemoprotein reductase] + H2O + H(+). Its pathway is mycotoxin biosynthesis; patulin biosynthesis. In terms of biological role, cytochrome P450 monooxygenase; part of the gene cluster that mediates the biosynthesis of patulin, an acetate-derived tetraketide mycotoxin produced by several fungal species that shows antimicrobial properties against several bacteria. PatH catalyzes the conversion of m-cresol into m-hydroxybenzyl alcohol. The pathway begins with the synthesis of 6-methylsalicylic acid by the polyketide synthase (PKS) patK via condensation of acetate and malonate units. The 6-methylsalicylic acid decarboxylase patG then catalyzes the decarboxylation of 6-methylsalicylic acid to yield m-cresol (also known as 3-methylphenol). These first reactions occur in the cytosol. The intermediate m-cresol is then transported into the endoplasmic reticulum where the cytochrome P450 monooxygenase patH converts it to m-hydroxybenzyl alcohol, which is further converted to gentisyl alcohol by the cytochrome P450 monooxygenase patI. The oxidoreductases patJ and patO further convert gentisyl alcohol to isoepoxydon in the vacuole. PatN catalyzes then the transformation of isoepoxydon into phyllostine. The cluster protein patF is responsible for the conversion from phyllostine to neopatulin whereas the alcohol dehydrogenase patD converts neopatulin to E-ascladiol. The steps between isoepoxydon and E-ascladiol occur in the cytosol, and E-ascladiol is probably secreted to the extracellular space by one of the cluster-specific transporters patC or patM. Finally, the secreted patulin synthase patE catalyzes the conversion of E-ascladiol to patulin. The polypeptide is Cytochrome P450 monooxygenase patH (Aspergillus clavatus (strain ATCC 1007 / CBS 513.65 / DSM 816 / NCTC 3887 / NRRL 1 / QM 1276 / 107)).